A 359-amino-acid polypeptide reads, in one-letter code: Peptide chain release factor 1 (359 aa).

Gln-235 bears the N5-methylglutamine mark.

The protein belongs to the prokaryotic/mitochondrial release factor family. In terms of processing, methylated by PrmC. Methylation increases the termination efficiency of RF1.

It is found in the cytoplasm. Functionally, peptide chain release factor 1 directs the termination of translation in response to the peptide chain termination codons UAG and UAA. This is Peptide chain release factor 1 from Chelativorans sp. (strain BNC1).